The following is a 447-amino-acid chain: Dihydroorotase (447 aa).

2 residues coordinate Zn(2+): histidine 81 and histidine 83. Substrate-binding positions include 83–85 and asparagine 115; that span reads HFR. The Zn(2+) site is built by aspartate 171, histidine 198, and histidine 252. Residue asparagine 298 coordinates substrate. Aspartate 325 serves as a coordination point for Zn(2+). The active site involves aspartate 325. Substrate is bound by residues histidine 329 and 343–344; that span reads FG.

The protein belongs to the metallo-dependent hydrolases superfamily. DHOase family. Class I DHOase subfamily. Requires Zn(2+) as cofactor.

The catalysed reaction is (S)-dihydroorotate + H2O = N-carbamoyl-L-aspartate + H(+). Its pathway is pyrimidine metabolism; UMP biosynthesis via de novo pathway; (S)-dihydroorotate from bicarbonate: step 3/3. Catalyzes the reversible cyclization of carbamoyl aspartate to dihydroorotate. The sequence is that of Dihydroorotase from Ehrlichia chaffeensis (strain ATCC CRL-10679 / Arkansas).